The primary structure comprises 298 residues: Phosphatidylglycerol--prolipoprotein diacylglyceryl transferase (298 aa).

The next 7 helical transmembrane spans lie at 17-37 (LAVRWYGLMYLVGFIAAIVVG), 59-79 (MMFYGVLGTVLGGRLGYVLFY), 97-117 (GGMSFHGGFLGVTLAMMLFAW), 129-149 (FVAPMVPLGLAAGRLGNFING), 204-224 (SQLYEIALEGIALFFVLFLFA), 230-250 (MGAISALFLIGYGLARFTVEF), and 257-277 (FLGLLALGLSMGQWLSLPMIL). Arg-142 lines the a 1,2-diacyl-sn-glycero-3-phospho-(1'-sn-glycerol) pocket.

It belongs to the Lgt family.

The protein localises to the cell inner membrane. It carries out the reaction L-cysteinyl-[prolipoprotein] + a 1,2-diacyl-sn-glycero-3-phospho-(1'-sn-glycerol) = an S-1,2-diacyl-sn-glyceryl-L-cysteinyl-[prolipoprotein] + sn-glycerol 1-phosphate + H(+). Its pathway is protein modification; lipoprotein biosynthesis (diacylglyceryl transfer). Its function is as follows. Catalyzes the transfer of the diacylglyceryl group from phosphatidylglycerol to the sulfhydryl group of the N-terminal cysteine of a prolipoprotein, the first step in the formation of mature lipoproteins. This is Phosphatidylglycerol--prolipoprotein diacylglyceryl transferase from Burkholderia orbicola (strain MC0-3).